Consider the following 258-residue polypeptide: Probable F-box protein At2g29610 (258 aa).

The interval 1-25 (MVELSEIPGDPNGADPNNNPQEEDE) is disordered. Residues 8-20 (PGDPNGADPNNNP) show a composition bias toward low complexity. The region spanning 28-74 (LPILLQLPEELIERIIAHFPQCYSPSPILVCETFRQVINSDHFYYVT) is the F-box domain.

In Arabidopsis thaliana (Mouse-ear cress), this protein is Probable F-box protein At2g29610.